The sequence spans 186 residues: Ribosome-recycling factor (186 aa).

Belongs to the RRF family.

The protein localises to the cytoplasm. Its function is as follows. Responsible for the release of ribosomes from messenger RNA at the termination of protein biosynthesis. May increase the efficiency of translation by recycling ribosomes from one round of translation to another. The polypeptide is Ribosome-recycling factor (Polaromonas sp. (strain JS666 / ATCC BAA-500)).